The primary structure comprises 255 residues: Transcription factor CAULIFLOWER (255 aa).

In terms of domain architecture, MADS-box spans 1-61 (MGRGRVELKR…GKLFEYSSES (61 aa)). A K-box domain is found at 90 to 180 (QTNWSMEYSR…TKQIKERENI (91 aa)). Positions 90-198 (QTNWSMEYSR…EQLNRSVDDV (109 aa)) form a coiled coil.

As to quaternary structure, homodimer capable of binding to CArG-box sequences. In terms of tissue distribution, expressed in young flower primordia.

The protein localises to the nucleus. Functionally, probable transcription factor that promotes early floral meristem identity in synergy with APETALA1, FRUITFULL and LEAFY. Is required subsequently for the transition of an inflorescence meristem into a floral meristem. Seems to be partially redundant to the function of APETALA1. Positively regulates the APETALA1 and LEAFY expression. The chain is Transcription factor CAULIFLOWER (CAL) from Arabidopsis thaliana (Mouse-ear cress).